A 280-amino-acid chain; its full sequence is Serine protease 33 (280 aa).

Positions 1–22 (MRGVSCLQVLLLLVLGAAGTQG) are cleaved as a signal peptide. A Peptidase S1 domain is found at 37–279 (IVGGRDGRDG…YSPWIQARVS (243 aa)). Cysteines 62 and 78 form a disulfide. Catalysis depends on charge relay system residues H77 and D126. 3 disulfides stabilise this stretch: C160–C237, C193–C216, and C227–C255. Residue S231 is the Charge relay system of the active site.

Belongs to the peptidase S1 family. In terms of tissue distribution, predominantly expressed in macrophages. Present in the spleen, small and large intestine, lung and brain (at protein level). Highly expressed in peripheral leukocytes, ovary, retina, spleen and stomach. Moderately expressed in thymus, uterus and platelets, as well as some brain tissues, such as thalamus and fetal brain.

Its subcellular location is the secreted. Serine protease that has amidolytic activity, cleaving its substrates before Arg residues. This Homo sapiens (Human) protein is Serine protease 33 (PRSS33).